The sequence spans 145 residues: Basic phospholipase A2 S11-61 (145 aa).

The N-terminal stretch at 1–19 (MYPVHLLVLLAVCVSLLGA) is a signal peptide. Residues 20–27 (SNIPPQPL) constitute a propeptide that is removed on maturation. Cystine bridges form between Cys-38–Cys-98, Cys-54–Cys-144, Cys-56–Cys-72, Cys-71–Cys-125, Cys-78–Cys-118, Cys-87–Cys-111, and Cys-105–Cys-116. 3 residues coordinate Ca(2+): Tyr-55, Gly-57, and Gly-59. His-75 is an active-site residue. Asp-76 provides a ligand contact to Ca(2+). The active site involves Asp-119.

It belongs to the phospholipase A2 family. Group I subfamily. D49 sub-subfamily. The cofactor is Ca(2+). Expressed by the venom gland.

It is found in the secreted. The enzyme catalyses a 1,2-diacyl-sn-glycero-3-phosphocholine + H2O = a 1-acyl-sn-glycero-3-phosphocholine + a fatty acid + H(+). Functionally, snake venom phospholipase A2 (PLA2) that inhibits collagen-induced platelet aggregation. PLA2 catalyzes the calcium-dependent hydrolysis of the 2-acyl groups in 3-sn-phosphoglycerides. The protein is Basic phospholipase A2 S11-61 of Austrelaps superbus (Lowland copperhead snake).